The sequence spans 589 residues: Aspartate--tRNA(Asp/Asn) ligase (589 aa).

An L-aspartate-binding site is contributed by Glu175. The aspartate stretch occupies residues Gln199 to Lys202. Arg221 is a binding site for L-aspartate. ATP is bound by residues Arg221–Glu223 and Gln230. Residue His451 participates in L-aspartate binding. ATP is bound at residue Glu485. Arg492 is an L-aspartate binding site. Gly537–Arg540 provides a ligand contact to ATP.

Belongs to the class-II aminoacyl-tRNA synthetase family. Type 1 subfamily. In terms of assembly, homodimer.

The protein localises to the cytoplasm. It catalyses the reaction tRNA(Asx) + L-aspartate + ATP = L-aspartyl-tRNA(Asx) + AMP + diphosphate. Aspartyl-tRNA synthetase with relaxed tRNA specificity since it is able to aspartylate not only its cognate tRNA(Asp) but also tRNA(Asn). Reaction proceeds in two steps: L-aspartate is first activated by ATP to form Asp-AMP and then transferred to the acceptor end of tRNA(Asp/Asn). This chain is Aspartate--tRNA(Asp/Asn) ligase, found in Roseiflexus sp. (strain RS-1).